The following is a 498-amino-acid chain: ATP synthase subunit beta, chloroplastic (498 aa).

The residue at position 6 (threonine 6) is a Phosphothreonine. At serine 13 the chain carries Phosphoserine. 172–179 (GGAGVGKT) contributes to the ATP binding site.

It belongs to the ATPase alpha/beta chains family. In terms of assembly, F-type ATPases have 2 components, CF(1) - the catalytic core - and CF(0) - the membrane proton channel. CF(1) has five subunits: alpha(3), beta(3), gamma(1), delta(1), epsilon(1). CF(0) has four main subunits: a(1), b(1), b'(1) and c(9-12).

The protein localises to the plastid. It localises to the chloroplast thylakoid membrane. The catalysed reaction is ATP + H2O + 4 H(+)(in) = ADP + phosphate + 5 H(+)(out). Its function is as follows. Produces ATP from ADP in the presence of a proton gradient across the membrane. The catalytic sites are hosted primarily by the beta subunits. The polypeptide is ATP synthase subunit beta, chloroplastic (Crucihimalaya wallichii (Rock-cress)).